The following is a 194-amino-acid chain: Probable DNA-directed RNA polymerase subunit delta (194 aa).

Residues 14-83 (LSMIEVARAI…GENKWGLRSW (70 aa)) form the HTH HARE-type domain. Positions 117 to 194 (GDEDAIDYSD…SDDEEDEEGE (78 aa)) are disordered.

It belongs to the RpoE family. As to quaternary structure, RNAP is composed of a core of 2 alpha, a beta and a beta' subunits. The core is associated with a delta subunit and one of several sigma factors.

Participates in both the initiation and recycling phases of transcription. In the presence of the delta subunit, RNAP displays an increased specificity of transcription, a decreased affinity for nucleic acids, and an increased efficiency of RNA synthesis because of enhanced recycling. The chain is Probable DNA-directed RNA polymerase subunit delta from Streptococcus mutans serotype c (strain ATCC 700610 / UA159).